Reading from the N-terminus, the 369-residue chain is MLLFTPGPVAINEEMRTSFSQPMPHHRTKDFEKIFQSVRENLKKMTGLEEVLLLSSSGTGAMEASVISLCQKELLFVNAGKFGERFGKIAKAHSIKAHELVYEWDTPAQVDEILSVLKANPNIDAFCIQACESSGGLRHPVEKIAQAIKETNPNVFVIVDAITALGVEPLEITHVDALIGGSQKAFMLPPAMSLVALSQNAIERIEERNVGFYFNLKSELKNQRNNTTSYTAPILHTLGLQRYFELVQNLGGFEALYRETKKAALATQKAVLALGLKIFPKSPSLSMTTIVNEHAKELRNLLKEKYQVQFAGGQEPYKDALIRINHMGIIPVYKSAYALNALELALNDLDLREFDGVANATFLKQYYGI.

Lys184 carries the post-translational modification N6-(pyridoxal phosphate)lysine.

Belongs to the class-V pyridoxal-phosphate-dependent aminotransferase family. Pyridoxal 5'-phosphate is required as a cofactor.

This is an uncharacterized protein from Helicobacter pylori (strain ATCC 700392 / 26695) (Campylobacter pylori).